We begin with the raw amino-acid sequence, 496 residues long: E3 ubiquitin-protein ligase Hakai (496 aa).

Positions 35-60 are disordered; it reads PNKIKPAPRPQRNMNRIPTKPQPGFD. The segment at 104–144 adopts an RING-type; degenerate zinc-finger fold; the sequence is CDKCGLPIKIYGRMIPCKHVFCYDCALMHEKKADKLCPGTL. The interval 157-215 is HYB domain; sequence CNDPVQRIEQCARGSLFMCSIVQGCKRTYLSQRDLQAHINHRHMRASKPTARPQPEPIH. A C2H2-type zinc finger spans residues 173–199; the sequence is FMCSIVQGCKRTYLSQRDLQAHINHRH. Polar residues predominate over residues 304–314; the sequence is VPIQDDSNSGA. Residues 304 to 496 form a disordered region; sequence VPIQDDSNSG…DQARYRPYYQ (193 aa). Composition is skewed to pro residues over residues 350 to 360, 380 to 397, and 407 to 430; these read APPPPPPPPIS, GPPPPMTTAPPPITPPPG, and MNHPPPGPPPQHGGPPVNAPPPHH. Positions 434-449 are enriched in polar residues; sequence SSMPQFNEDQGTLSPP. Pro residues predominate over residues 464 to 483; that stretch reads PRGPPPRMQGPPSQAPMPGP.

Belongs to the Hakai family. Homodimer. Interacts with tyrosine-phosphorylated SRC substrates. Component of the WMM complex, a N6-methyltransferase complex composed of a catalytic subcomplex, named MAC, and of an associated subcomplex, named MACOM. Component of the MACOM subcomplex.

It is found in the nucleus speckle. It localises to the nucleus. The protein localises to the nucleoplasm. It catalyses the reaction S-ubiquitinyl-[E2 ubiquitin-conjugating enzyme]-L-cysteine + [acceptor protein]-L-lysine = [E2 ubiquitin-conjugating enzyme]-L-cysteine + N(6)-ubiquitinyl-[acceptor protein]-L-lysine.. The protein operates within protein modification; protein ubiquitination. In terms of biological role, E3 ubiquitin-protein ligase that mediates ubiquitination of several tyrosine-phosphorylated Src substrates. Associated component of the WMM complex, a complex that mediates N6-methyladenosine (m6A) methylation of RNAs, a modification that plays a role in the efficiency of mRNA splicing and RNA processing. The polypeptide is E3 ubiquitin-protein ligase Hakai (Xenopus laevis (African clawed frog)).